Reading from the N-terminus, the 360-residue chain is UDP-N-acetylglucosamine--N-acetylmuramyl-(pentapeptide) pyrophosphoryl-undecaprenol N-acetylglucosamine transferase (360 aa).

Residues Ser198 and Gln289 each contribute to the UDP-N-acetyl-alpha-D-glucosamine site.

This sequence belongs to the glycosyltransferase 28 family. MurG subfamily.

Its subcellular location is the cell membrane. It catalyses the reaction Mur2Ac(oyl-L-Ala-gamma-D-Glu-L-Lys-D-Ala-D-Ala)-di-trans,octa-cis-undecaprenyl diphosphate + UDP-N-acetyl-alpha-D-glucosamine = beta-D-GlcNAc-(1-&gt;4)-Mur2Ac(oyl-L-Ala-gamma-D-Glu-L-Lys-D-Ala-D-Ala)-di-trans,octa-cis-undecaprenyl diphosphate + UDP + H(+). The protein operates within cell wall biogenesis; peptidoglycan biosynthesis. Functionally, cell wall formation. Catalyzes the transfer of a GlcNAc subunit on undecaprenyl-pyrophosphoryl-MurNAc-pentapeptide (lipid intermediate I) to form undecaprenyl-pyrophosphoryl-MurNAc-(pentapeptide)GlcNAc (lipid intermediate II). The polypeptide is UDP-N-acetylglucosamine--N-acetylmuramyl-(pentapeptide) pyrophosphoryl-undecaprenol N-acetylglucosamine transferase (Streptococcus pyogenes serotype M3 (strain SSI-1)).